A 404-amino-acid polypeptide reads, in one-letter code: Imidazolonepropionase (404 aa).

His73 and His75 together coordinate Fe(3+). The Zn(2+) site is built by His73 and His75. 4-imidazolone-5-propanoate contacts are provided by Arg82, Tyr145, and His178. Residue Tyr145 coordinates N-formimidoyl-L-glutamate. Fe(3+) is bound at residue His243. His243 lines the Zn(2+) pocket. Gln246 contributes to the 4-imidazolone-5-propanoate binding site. Asp318 provides a ligand contact to Fe(3+). Asp318 provides a ligand contact to Zn(2+). Asn320 and Gly322 together coordinate N-formimidoyl-L-glutamate. Ser323 serves as a coordination point for 4-imidazolone-5-propanoate.

Belongs to the metallo-dependent hydrolases superfamily. HutI family. The cofactor is Zn(2+). Requires Fe(3+) as cofactor.

Its subcellular location is the cytoplasm. The catalysed reaction is 4-imidazolone-5-propanoate + H2O = N-formimidoyl-L-glutamate. Its pathway is amino-acid degradation; L-histidine degradation into L-glutamate; N-formimidoyl-L-glutamate from L-histidine: step 3/3. Functionally, catalyzes the hydrolytic cleavage of the carbon-nitrogen bond in imidazolone-5-propanoate to yield N-formimidoyl-L-glutamate. It is the third step in the universal histidine degradation pathway. In Bradyrhizobium sp. (strain BTAi1 / ATCC BAA-1182), this protein is Imidazolonepropionase.